Consider the following 294-residue polypeptide: Phosphoribosylaminoimidazole-succinocarboxamide synthase (294 aa).

The protein belongs to the SAICAR synthetase family.

The enzyme catalyses 5-amino-1-(5-phospho-D-ribosyl)imidazole-4-carboxylate + L-aspartate + ATP = (2S)-2-[5-amino-1-(5-phospho-beta-D-ribosyl)imidazole-4-carboxamido]succinate + ADP + phosphate + 2 H(+). The protein operates within purine metabolism; IMP biosynthesis via de novo pathway; 5-amino-1-(5-phospho-D-ribosyl)imidazole-4-carboxamide from 5-amino-1-(5-phospho-D-ribosyl)imidazole-4-carboxylate: step 1/2. This is Phosphoribosylaminoimidazole-succinocarboxamide synthase from Rhodococcus opacus (strain B4).